The chain runs to 363 residues: NAD(P)H-quinone oxidoreductase subunit 1, chloroplastic (363 aa).

6 helical membrane-spanning segments follow: residues 28-48, 98-118, 127-147, 248-268, 300-320, and 343-363; these read WVLV…LVIV, FSIG…VIPF, LPIG…GLLM, YSGI…LVSS, VFGM…FLFI, and FLLP…LFSL.

Belongs to the complex I subunit 1 family. NDH is composed of at least 16 different subunits, 5 of which are encoded in the nucleus.

It is found in the plastid. The protein resides in the chloroplast thylakoid membrane. It catalyses the reaction a plastoquinone + NADH + (n+1) H(+)(in) = a plastoquinol + NAD(+) + n H(+)(out). The enzyme catalyses a plastoquinone + NADPH + (n+1) H(+)(in) = a plastoquinol + NADP(+) + n H(+)(out). In terms of biological role, NDH shuttles electrons from NAD(P)H:plastoquinone, via FMN and iron-sulfur (Fe-S) centers, to quinones in the photosynthetic chain and possibly in a chloroplast respiratory chain. The immediate electron acceptor for the enzyme in this species is believed to be plastoquinone. Couples the redox reaction to proton translocation, and thus conserves the redox energy in a proton gradient. This Cucumis sativus (Cucumber) protein is NAD(P)H-quinone oxidoreductase subunit 1, chloroplastic.